A 585-amino-acid chain; its full sequence is Glutamine--tRNA ligase (585 aa).

The 'HIGH' region signature appears at Pro-51–His-61. ATP-binding positions include Glu-52–Asn-54 and His-58–Ser-64. Asp-84 and Tyr-238 together coordinate L-glutamine. ATP-binding positions include Thr-257 and Arg-292 to Leu-293. Positions Ile-299 to Arg-303 match the 'KMSKS' region motif.

It belongs to the class-I aminoacyl-tRNA synthetase family. As to quaternary structure, monomer.

It localises to the cytoplasm. It carries out the reaction tRNA(Gln) + L-glutamine + ATP = L-glutaminyl-tRNA(Gln) + AMP + diphosphate. The protein is Glutamine--tRNA ligase of Cupriavidus necator (strain ATCC 17699 / DSM 428 / KCTC 22496 / NCIMB 10442 / H16 / Stanier 337) (Ralstonia eutropha).